A 172-amino-acid polypeptide reads, in one-letter code: Putative methyltransferase Mtx subunit A (172 aa).

The protein belongs to the MtrA family. May be part of a complex composed of 3 subunits; MtxA, MtxH and MtxX.

The polypeptide is Putative methyltransferase Mtx subunit A (mtxA) (Methanosarcina mazei (strain ATCC BAA-159 / DSM 3647 / Goe1 / Go1 / JCM 11833 / OCM 88) (Methanosarcina frisia)).